The sequence spans 321 residues: Cytochrome c biogenesis protein CcsA (321 aa).

7 helical membrane-spanning segments follow: residues 17-37 (IISIVITIHLVTLLVHEIVGL), 43-63 (KGMIAAFFCITGLLVTRWIYS), 71-91 (LYESLMFLSWSFSIIHMVPKI), 143-163 (MLLSYAALLCGSLLSVALLVI), 225-245 (VISLGFTFLTIGILSGAVWAN), 258-273 (ETWAFITWTIFAIYLH), and 286-306 (AIVASMGFLIIWICYFGVNLL).

The protein belongs to the CcmF/CycK/Ccl1/NrfE/CcsA family. In terms of assembly, may interact with Ccs1.

The protein resides in the plastid. Its subcellular location is the chloroplast thylakoid membrane. Its function is as follows. Required during biogenesis of c-type cytochromes (cytochrome c6 and cytochrome f) at the step of heme attachment. The protein is Cytochrome c biogenesis protein CcsA of Liriodendron tulipifera (Tuliptree).